The following is a 143-amino-acid chain: Protein RJ1 (143 aa).

Positions 1–26 (MARVMTRGMARVSTLATVRVSTLARA) are cleaved as a signal peptide.

The polypeptide is Protein RJ1 (RJ1) (Human herpesvirus 6A (strain Uganda-1102) (HHV-6 variant A)).